The chain runs to 499 residues: Hepatic triacylglycerol lipase (499 aa).

Positions 1–22 (MDTSPLCFSILLVLCIFIQSSA) are cleaved as a signal peptide. N-linked (GlcNAc...) asparagine glycans are attached at residues Asn-42 and Asn-78. Ser-168 serves as the catalytic Nucleophile. Asp-194 (charge relay system) is an active-site residue. The interval 254–277 (CHFLELYRHIAQHGFNAITQTIKC) is essential for determining substrate specificity. Residue His-279 is the Charge relay system of the active site. The region spanning 352–486 (YHYQFKIQFI…RPTQEKIFVK (135 aa)) is the PLAT domain. 2 N-linked (GlcNAc...) asparagine glycosylation sites follow: Asn-362 and Asn-397.

Belongs to the AB hydrolase superfamily. Lipase family. Homodimer.

The protein localises to the secreted. The catalysed reaction is a triacylglycerol + H2O = a diacylglycerol + a fatty acid + H(+). It catalyses the reaction a 1-acyl-sn-glycero-3-phosphocholine + H2O = sn-glycerol 3-phosphocholine + a fatty acid + H(+). It carries out the reaction a 1,2-diacyl-sn-glycero-3-phosphocholine + H2O = a 2-acyl-sn-glycero-3-phosphocholine + a fatty acid + H(+). The enzyme catalyses 1,2,3-tri-(9Z-octadecenoyl)-glycerol + H2O = di-(9Z)-octadecenoylglycerol + (9Z)-octadecenoate + H(+). The catalysed reaction is 1,2-di-(9Z-octadecenoyl)-sn-glycero-3-phosphocholine + H2O = (9Z-octadecenoyl)-sn-glycero-3-phosphocholine + (9Z)-octadecenoate + H(+). It catalyses the reaction 1,2,3-tributanoylglycerol + H2O = dibutanoylglycerol + butanoate + H(+). It carries out the reaction 1,2-dihexadecanoyl-sn-glycero-3-phosphocholine + H2O = hexadecanoyl-sn-glycero-3-phosphocholine + hexadecanoate + H(+). The enzyme catalyses 1,2-di-(9Z-octadecenoyl)-sn-glycerol + H2O = 2-(9Z-octadecenoyl)-glycerol + (9Z)-octadecenoate + H(+). The catalysed reaction is 1,2,3-tri-(9Z-octadecenoyl)-glycerol + H2O = 2,3-di-(9Z)-octadecenoyl-sn-glycerol + (9Z)-octadecenoate + H(+). It catalyses the reaction 1-(9Z-octadecenoyl)-sn-glycero-3-phospho-L-serine + H2O = sn-glycero-3-phospho-L-serine + (9Z)-octadecenoate + H(+). It carries out the reaction 1-hexadecanoyl-sn-glycero-3-phosphocholine + H2O = sn-glycerol 3-phosphocholine + hexadecanoate + H(+). The enzyme catalyses 1,3-di-(9Z-octadecenoyl)-glycerol + H2O = 3-(9Z-octadecenoyl)-sn-glycerol + (9Z)-octadecenoate + H(+). Its activity is regulated as follows. Phospholipase A1 and triacylglycerol lipase are inhibited by sphingomyelin. In terms of biological role, catalyzes the hydrolysis of triglycerides and phospholipids present in circulating plasma lipoproteins, including chylomicrons, intermediate density lipoproteins (IDL), low density lipoproteins (LDL) of large size and high density lipoproteins (HDL), releasing free fatty acids (FFA) and smaller lipoprotein particles. Also exhibits lysophospholipase activity. Can hydrolyze both neutral lipid and phospholipid substrates but shows a greater binding affinity for neutral lipid substrates than phospholipid substrates. In native LDL, preferentially hydrolyzes the phosphatidylcholine species containing polyunsaturated fatty acids at sn-2 position. The polypeptide is Hepatic triacylglycerol lipase (LIPC) (Homo sapiens (Human)).